Consider the following 191-residue polypeptide: Leucyl/phenylalanyl-tRNA--protein transferase (191 aa).

It belongs to the L/F-transferase family.

The protein localises to the cytoplasm. The enzyme catalyses N-terminal L-lysyl-[protein] + L-leucyl-tRNA(Leu) = N-terminal L-leucyl-L-lysyl-[protein] + tRNA(Leu) + H(+). The catalysed reaction is N-terminal L-arginyl-[protein] + L-leucyl-tRNA(Leu) = N-terminal L-leucyl-L-arginyl-[protein] + tRNA(Leu) + H(+). It carries out the reaction L-phenylalanyl-tRNA(Phe) + an N-terminal L-alpha-aminoacyl-[protein] = an N-terminal L-phenylalanyl-L-alpha-aminoacyl-[protein] + tRNA(Phe). Functionally, functions in the N-end rule pathway of protein degradation where it conjugates Leu, Phe and, less efficiently, Met from aminoacyl-tRNAs to the N-termini of proteins containing an N-terminal arginine or lysine. The polypeptide is Leucyl/phenylalanyl-tRNA--protein transferase (Nostoc sp. (strain PCC 7120 / SAG 25.82 / UTEX 2576)).